The primary structure comprises 278 residues: 4-deoxy-L-threo-5-hexosulose-uronate ketol-isomerase (278 aa).

Zn(2+)-binding residues include His196, His198, Glu203, and His245.

This sequence belongs to the KduI family. Zn(2+) is required as a cofactor.

The enzyme catalyses 5-dehydro-4-deoxy-D-glucuronate = 3-deoxy-D-glycero-2,5-hexodiulosonate. It functions in the pathway glycan metabolism; pectin degradation; 2-dehydro-3-deoxy-D-gluconate from pectin: step 4/5. Its function is as follows. Catalyzes the isomerization of 5-dehydro-4-deoxy-D-glucuronate to 3-deoxy-D-glycero-2,5-hexodiulosonate. In Salmonella heidelberg (strain SL476), this protein is 4-deoxy-L-threo-5-hexosulose-uronate ketol-isomerase.